The chain runs to 209 residues: uncharacterized protein (209 aa).

This is an uncharacterized protein from Orgyia pseudotsugata (Douglas-fir tussock moth).